We begin with the raw amino-acid sequence, 1408 residues long: ARF guanine-nucleotide exchange factor 1 (1408 aa).

Phosphoserine is present on serine 49. Positions 262-287 (TTTSDNDLSSTDDDSAVADDNKNEKP) are disordered. Residues 552–706 (FNEKAKKGIQ…IIMLNTDSHN (155 aa)) enclose the SEC7 domain.

Interacts (via N-terminal region) with SEC21 (via C-terminus). Interacts with GMH1. Interacts with DRS2.

It localises to the cytoplasm. Its subcellular location is the cytosol. It is found in the membrane. The protein resides in the endoplasmic reticulum. The protein localises to the mitochondrion. Activates the ARF proteins by exchanging bound GDP for free GTP. Plays a role in maintaining mitochondrial morphology, and in the turnover of mitochondria through mitophagy. The chain is ARF guanine-nucleotide exchange factor 1 (GEA1) from Saccharomyces cerevisiae (strain ATCC 204508 / S288c) (Baker's yeast).